A 61-amino-acid polypeptide reads, in one-letter code: MASKSKVAKALRTPKFSTRKENRCKFCGRPRSVYRKFGLCRICFRENANAGLIPGVRKSSW.

The Zn(2+) site is built by Cys24, Cys27, Cys40, and Cys43.

It belongs to the universal ribosomal protein uS14 family. Zinc-binding uS14 subfamily. As to quaternary structure, part of the 30S ribosomal subunit. Contacts proteins S3 and S10. Requires Zn(2+) as cofactor.

Its function is as follows. Binds 16S rRNA, required for the assembly of 30S particles and may also be responsible for determining the conformation of the 16S rRNA at the A site. This chain is Small ribosomal subunit protein uS14, found in Rhodopirellula baltica (strain DSM 10527 / NCIMB 13988 / SH1).